The primary structure comprises 451 residues: UPF0210 protein NGO_1297 (451 aa).

Belongs to the UPF0210 family. In terms of assembly, homodimer.

The sequence is that of UPF0210 protein NGO_1297 from Neisseria gonorrhoeae (strain ATCC 700825 / FA 1090).